Consider the following 136-residue polypeptide: Histone H3.3 (136 aa).

The segment at Met-1–Tyr-42 is disordered. N6,N6,N6-trimethyllysine; alternate is present on Lys-5. Lys-5 is modified (N6,N6-dimethyllysine; alternate). N6-methyllysine; alternate occurs at positions 5 and 10. Lys-10 bears the N6-acetyllysine; alternate mark. Ser-11 is subject to Phosphoserine. N6,N6-dimethyllysine; alternate is present on Lys-15. An N6-acetyllysine; alternate mark is found at Lys-15, Lys-19, Lys-24, Lys-28, and Lys-37. Residues Lys-19, Lys-24, Lys-28, and Lys-37 each carry the N6-methyllysine; alternate modification. Residues Lys-28 and Lys-37 each carry the N6,N6,N6-trimethyllysine; alternate modification. An N6,N6-dimethyllysine; alternate mark is found at Lys-28 and Lys-37. Residues Lys-57 and Lys-65 each carry the N6-acetyllysine modification. Lys-80 is subject to N6,N6,N6-trimethyllysine; alternate. Lys-80 is modified (N6,N6-dimethyllysine; alternate). The residue at position 80 (Lys-80) is an N6-methyllysine; alternate.

The protein belongs to the histone H3 family. As to quaternary structure, the nucleosome is a histone octamer containing two molecules each of H2A, H2B, H3 and H4 assembled in one H3-H4 heterotetramer and two H2A-H2B heterodimers. The octamer wraps approximately 147 bp of DNA. Post-translationally, phosphorylated to form H3S10ph. H3S10ph promotes subsequent H3K14ac formation and is required for transcriptional activation through TBP recruitment to the promoters. Mono-, di- and trimethylated by the COMPASS complex to form H3K4me1/2/3. H3K4me activates gene expression by regulating transcription elongation and plays a role in telomere length maintenance. H3K4me enrichment correlates with transcription levels, and occurs in a 5' to 3' gradient with H3K4me3 enrichment at the 5'-end of genes, shifting to H3K4me2 and then H3K4me1. Methylated by SET2 to form H3K36me. H3K36me represses gene expression. Methylated by DOT1 to form H3K79me. H3K79me is required for association of SIR proteins with telomeric regions and for telomeric silencing. The COMPASS-mediated formation of H3K4me2/3 and the DOT1-mediated formation of H3K79me require H2BK123ub1. In terms of processing, acetylation of histone H3 leads to transcriptional activation. H3K14ac formation by GCN5 is promoted by H3S10ph. H3K14ac can also be formed by ESA1. H3K56ac formation occurs predominantly in newly synthesized H3 molecules during G1, S and G2/M of the cell cycle and may be involved in DNA repair.

The protein localises to the nucleus. Its subcellular location is the chromosome. In terms of biological role, core component of nucleosome. Nucleosomes wrap and compact DNA into chromatin, limiting DNA accessibility to the cellular machineries which require DNA as a template. Histones thereby play a central role in transcription regulation, DNA repair, DNA replication and chromosomal stability. DNA accessibility is regulated via a complex set of post-translational modifications of histones, also called histone code, and nucleosome remodeling. The sequence is that of Histone H3.3 (HHT3) from Lodderomyces elongisporus (strain ATCC 11503 / CBS 2605 / JCM 1781 / NBRC 1676 / NRRL YB-4239) (Yeast).